We begin with the raw amino-acid sequence, 622 residues long: Probable ATP-citrate synthase (622 aa).

ATP-binding positions include 228-248 (ALRY…ELGG) and 279-305 (FPTE…KNKA). A Mg(2+)-binding site is contributed by Glu-245. The active-site Tele-phosphohistidine intermediate is the His-287. 306–316 (LREAGAVVPTS) provides a ligand contact to CoA.

This sequence in the N-terminal section; belongs to the succinate/malate CoA ligase beta subunit family. It in the C-terminal section; belongs to the succinate/malate CoA ligase alpha subunit family. Homotetramer.

The protein localises to the cytoplasm. The enzyme catalyses oxaloacetate + acetyl-CoA + ADP + phosphate = citrate + ATP + CoA. Its function is as follows. Catalyzes the cleavage of citrate into oxaloacetate and acetyl-CoA, the latter serving as common substrate in multiple biochemical reactions in protein, carbohydrate and lipid metabolism. The protein is Probable ATP-citrate synthase (acly) of Dictyostelium discoideum (Social amoeba).